Here is a 122-residue protein sequence, read N- to C-terminus: Small ribosomal subunit protein uS13 (122 aa).

The segment at 94 to 122 (KQLPVRGQRTHTNARTRKGKAKPIAGKKK) is disordered.

Belongs to the universal ribosomal protein uS13 family. In terms of assembly, part of the 30S ribosomal subunit. Forms a loose heterodimer with protein S19. Forms two bridges to the 50S subunit in the 70S ribosome.

Functionally, located at the top of the head of the 30S subunit, it contacts several helices of the 16S rRNA. In the 70S ribosome it contacts the 23S rRNA (bridge B1a) and protein L5 of the 50S subunit (bridge B1b), connecting the 2 subunits; these bridges are implicated in subunit movement. Contacts the tRNAs in the A and P-sites. The polypeptide is Small ribosomal subunit protein uS13 (Methylorubrum extorquens (strain PA1) (Methylobacterium extorquens)).